We begin with the raw amino-acid sequence, 379 residues long: Histone-lysine N-methyltransferase ATXR5 (379 aa).

Residues Met-1–Ser-15 are compositionally biased toward low complexity. A disordered region spans residues Met-1 to Glu-42. Residues Met-1 to Met-44 constitute a chloroplast transit peptide. The PHD-type zinc-finger motif lies at Asn-64–Gln-114. Residues Gln-122–Phe-129 carry the PIP motif motif. Substrate is bound at residue Met-221. The region spanning Pro-245–Asn-367 is the SET domain. Residues Glu-255–Tyr-257 and Arg-317–Gly-321 each bind S-adenosyl-L-methionine. Arg-339 lines the substrate pocket. Residue Tyr-366 participates in S-adenosyl-L-methionine binding. Tyr-369–Glu-370 contributes to the substrate binding site. Tyr-373 serves as a coordination point for S-adenosyl-L-methionine.

This sequence belongs to the class V-like SAM-binding methyltransferase superfamily. Histone-lysine methyltransferase family. TRX/MLL subfamily. Isoform 1 but not isoform 2 interacts with PCNA1 and PCNA2. Interacts (via PHD domain) with HTR1 (via N-terminus). Isoform 2 interacts with IPS1. Expressed in leaves, roots, stems, flowers, siliques and developing pollen. Up-regulated in tissues where cell division is active.

Its subcellular location is the nucleus. The protein resides in the plastid. It localises to the chloroplast. It carries out the reaction L-lysyl(27)-[histone H3] + S-adenosyl-L-methionine = N(6)-methyl-L-lysyl(27)-[histone H3] + S-adenosyl-L-homocysteine + H(+). Functionally, histone methyltransferase that specifically monomethylates 'Lys-27' of histone H3 (H3K27me1). Has much higher activity on nucleosomes containing H3.1 than H3.3. Involved in the formation of constitutive heterochromatin and the silencing of heterochromatic elements. Influences which sets of rRNA gene variants are expressed or silenced. This is Histone-lysine N-methyltransferase ATXR5 (ATXR5) from Arabidopsis thaliana (Mouse-ear cress).